The sequence spans 218 residues: GTP cyclohydrolase 1 (218 aa).

3 residues coordinate Zn(2+): Cys109, His112, and Cys180.

It belongs to the GTP cyclohydrolase I family. As to quaternary structure, toroid-shaped homodecamer, composed of two pentamers of five dimers.

The catalysed reaction is GTP + H2O = 7,8-dihydroneopterin 3'-triphosphate + formate + H(+). It participates in cofactor biosynthesis; 7,8-dihydroneopterin triphosphate biosynthesis; 7,8-dihydroneopterin triphosphate from GTP: step 1/1. This Aeromonas hydrophila subsp. hydrophila (strain ATCC 7966 / DSM 30187 / BCRC 13018 / CCUG 14551 / JCM 1027 / KCTC 2358 / NCIMB 9240 / NCTC 8049) protein is GTP cyclohydrolase 1.